The sequence spans 278 residues: 4-deoxy-L-threo-5-hexosulose-uronate ketol-isomerase (278 aa).

4 residues coordinate Zn(2+): H196, H198, E203, and H245.

This sequence belongs to the KduI family. The cofactor is Zn(2+).

The enzyme catalyses 5-dehydro-4-deoxy-D-glucuronate = 3-deoxy-D-glycero-2,5-hexodiulosonate. It functions in the pathway glycan metabolism; pectin degradation; 2-dehydro-3-deoxy-D-gluconate from pectin: step 4/5. Its function is as follows. Catalyzes the isomerization of 5-dehydro-4-deoxy-D-glucuronate to 3-deoxy-D-glycero-2,5-hexodiulosonate. This is 4-deoxy-L-threo-5-hexosulose-uronate ketol-isomerase from Shigella flexneri.